Reading from the N-terminus, the 313-residue chain is Mitochondrial uncoupling protein 4 (313 aa).

Solcar repeat units lie at residues 4–115 (KSFV…LKNK), 124–215 (LNLS…FKEG), and 224–309 (DGLG…VRKL). 6 helical membrane-spanning segments follow: residues 6–26 (FVEG…LDLI), 84–104 (AAAL…YSTT), 130–150 (IGAG…ADVA), 189–209 (RGSA…LASY), 230–250 (VVAS…VDVI), and 282–302 (YKGF…LFVT).

It belongs to the mitochondrial carrier (TC 2.A.29) family. In terms of tissue distribution, expressed in roots, leaves, stems and flowers.

The protein localises to the mitochondrion inner membrane. In terms of biological role, PUMPS are mitochondrial transporter proteins that create proton leaks across the inner mitochondrial membrane, thus uncoupling oxidative phosphorylation. This leads to a decrease in the efficiency of oxidative phosphorylation and an increase in heat production. May be involved in protecting plant cells against oxidative stress damage. Recombinant PUMP4, reconstituted into liposomes, transports a wide range of dicarboxylic acids including malate, oxaloacetate and succinate as well as phosphate, sulfate and thiosulfate. However, it is unknown if these transports are of any biological significance in vivo. The polypeptide is Mitochondrial uncoupling protein 4 (PUMP4) (Arabidopsis thaliana (Mouse-ear cress)).